A 183-amino-acid chain; its full sequence is Potassium-transporting ATPase KdpC subunit (183 aa).

Residues 11 to 31 (LILLLAVVTGALYPLAVTGVA) traverse the membrane as a helical segment.

This sequence belongs to the KdpC family. The system is composed of three essential subunits: KdpA, KdpB and KdpC.

It localises to the cell inner membrane. Its function is as follows. Part of the high-affinity ATP-driven potassium transport (or Kdp) system, which catalyzes the hydrolysis of ATP coupled with the electrogenic transport of potassium into the cytoplasm. This subunit acts as a catalytic chaperone that increases the ATP-binding affinity of the ATP-hydrolyzing subunit KdpB by the formation of a transient KdpB/KdpC/ATP ternary complex. The polypeptide is Potassium-transporting ATPase KdpC subunit (Pseudomonas putida (strain W619)).